Reading from the N-terminus, the 232-residue chain is 2-C-methyl-D-erythritol 4-phosphate cytidylyltransferase (232 aa).

This sequence belongs to the IspD/TarI cytidylyltransferase family. IspD subfamily.

It catalyses the reaction 2-C-methyl-D-erythritol 4-phosphate + CTP + H(+) = 4-CDP-2-C-methyl-D-erythritol + diphosphate. Its pathway is isoprenoid biosynthesis; isopentenyl diphosphate biosynthesis via DXP pathway; isopentenyl diphosphate from 1-deoxy-D-xylulose 5-phosphate: step 2/6. In terms of biological role, catalyzes the formation of 4-diphosphocytidyl-2-C-methyl-D-erythritol from CTP and 2-C-methyl-D-erythritol 4-phosphate (MEP). The chain is 2-C-methyl-D-erythritol 4-phosphate cytidylyltransferase from Synechococcus elongatus (strain ATCC 33912 / PCC 7942 / FACHB-805) (Anacystis nidulans R2).